A 564-amino-acid polypeptide reads, in one-letter code: Arginine--tRNA ligase (564 aa).

Residues 122 to 132 carry the 'HIGH' region motif; sequence PNIAKPFSIGH.

It belongs to the class-I aminoacyl-tRNA synthetase family. In terms of assembly, monomer.

Its subcellular location is the cytoplasm. The catalysed reaction is tRNA(Arg) + L-arginine + ATP = L-arginyl-tRNA(Arg) + AMP + diphosphate. This is Arginine--tRNA ligase from Lactococcus lactis subsp. cremoris (strain SK11).